The primary structure comprises 767 residues: Protein transport protein Sec23B (767 aa).

A2 is modified (N-acetylalanine). Zn(2+)-binding residues include C61, C66, C85, and C88. The residue at position 564 (K564) is an N6-acetyllysine. Residues 634 to 720 (PEPVLLDSSS…EHGGSQARFL (87 aa)) form a Gelsolin-like repeat.

This sequence belongs to the SEC23/SEC24 family. SEC23 subfamily. COPII is composed of at least five proteins: the Sec23/24 complex, the Sec13/31 complex and Sar1. Interacts with SAR1A. Ubiquitously expressed.

Its subcellular location is the cytoplasmic vesicle. It localises to the COPII-coated vesicle membrane. The protein localises to the endoplasmic reticulum membrane. The protein resides in the cytoplasm. It is found in the cytosol. Component of the coat protein complex II (COPII) which promotes the formation of transport vesicles from the endoplasmic reticulum (ER). The coat has two main functions, the physical deformation of the endoplasmic reticulum membrane into vesicles and the selection of cargo molecules for their transport to the Golgi complex. This Homo sapiens (Human) protein is Protein transport protein Sec23B.